The sequence spans 260 residues: Flap endonuclease Xni (260 aa).

D105 contributes to the Mg(2+) binding site. Positions 164–259 (NQFLDLMALA…VNGPANTQQA (96 aa)) constitute a 5'-3' exonuclease domain. Residues L172, A173, P181, I183, and I186 each coordinate K(+). The interaction with DNA stretch occupies residues 185–190 (GIGPKS).

Belongs to the Xni family. Requires Mg(2+) as cofactor. K(+) serves as cofactor.

Its function is as follows. Has flap endonuclease activity. During DNA replication, flap endonucleases cleave the 5'-overhanging flap structure that is generated by displacement synthesis when DNA polymerase encounters the 5'-end of a downstream Okazaki fragment. The polypeptide is Flap endonuclease Xni (Shewanella sp. (strain MR-4)).